The chain runs to 369 residues: Anhydro-N-acetylmuramic acid kinase (369 aa).

ATP is bound at residue 12 to 19; the sequence is GTSLDGVD.

Belongs to the anhydro-N-acetylmuramic acid kinase family.

The catalysed reaction is 1,6-anhydro-N-acetyl-beta-muramate + ATP + H2O = N-acetyl-D-muramate 6-phosphate + ADP + H(+). It participates in amino-sugar metabolism; 1,6-anhydro-N-acetylmuramate degradation. It functions in the pathway cell wall biogenesis; peptidoglycan recycling. Its function is as follows. Catalyzes the specific phosphorylation of 1,6-anhydro-N-acetylmuramic acid (anhMurNAc) with the simultaneous cleavage of the 1,6-anhydro ring, generating MurNAc-6-P. Is required for the utilization of anhMurNAc either imported from the medium or derived from its own cell wall murein, and thus plays a role in cell wall recycling. The protein is Anhydro-N-acetylmuramic acid kinase of Escherichia coli (strain K12 / MC4100 / BW2952).